We begin with the raw amino-acid sequence, 686 residues long: Eomesodermin homolog (686 aa).

A disordered region spans residues 27–46 (GGSGGSAGHLPSAAPSPQKL). The span at 34 to 43 (GHLPSAAPSP) shows a compositional bias: low complexity. Ser-107 is modified (phosphoserine). Positions 276 to 456 (LWLKFHRHQT…HNPFAKGFRD (181 aa)) form a DNA-binding region, T-box. The interval 571–686 (AMAGWGGRGS…GGYYAFYTTP (116 aa)) is required for transcription activation. Residues 639–686 (ACKRRRLSPSNSSNENSPSIKCEDINAEEYSKDTSKGMGGYYAFYTTP) are disordered. The segment covering 646-657 (SPSNSSNENSPS) has biased composition (low complexity). The segment covering 659-673 (KCEDINAEEYSKDTS) has biased composition (basic and acidic residues).

Expressed in CD8+ T-cells.

It localises to the nucleus. In terms of biological role, functions as a transcriptional activator playing a crucial role during development. Functions in trophoblast differentiation and later in gastrulation, regulating both mesoderm delamination and endoderm specification. Plays a role in brain development being required for the specification and the proliferation of the intermediate progenitor cells and their progeny in the cerebral cortex. Required for differentiation and migration of unipolar dendritic brush cells. Also involved in the differentiation of CD8+ T-cells during immune response regulating the expression of lytic effector genes. The protein is Eomesodermin homolog (EOMES) of Homo sapiens (Human).